The following is a 103-amino-acid chain: Large ribosomal subunit protein bL21 (103 aa).

It belongs to the bacterial ribosomal protein bL21 family. As to quaternary structure, part of the 50S ribosomal subunit. Contacts protein L20.

In terms of biological role, this protein binds to 23S rRNA in the presence of protein L20. This chain is Large ribosomal subunit protein bL21, found in Rhodococcus jostii (strain RHA1).